A 770-amino-acid chain; its full sequence is Transducin-like enhancer protein 1 (770 aa).

Residues 1 to 131 (MFPQSRHPTP…IIGQQQLQAQ (131 aa)) are q domain. 2 disordered regions span residues 128 to 157 (LQAQHLSHGHGPPVPLTPHPSGLQPPGIPP) and 176 to 346 (HLAI…PAME). The segment at 132–199 (HLSHGHGPPV…RHRDRESGTS (68 aa)) is GP domain. A compositionally biased stretch (low complexity) spans 146–157 (HPSGLQPPGIPP). Composition is skewed to basic and acidic residues over residues 178 to 196 (AIKDDKKHHDAERHRDRES) and 209 to 244 (RSTDKRRNGPEFSSDIKKRKVDDKDNYDSDGDKSDD). The ccN domain stretch occupies residues 200 to 266 (NSLLVPDSLR…SPHASPTHSP (67 aa)). Positions 225–228 (KKRK) match the Nuclear localization signal motif. Ser-237 is subject to Phosphoserine; by CK2. Residues 255 to 264 (PSSPHASPTH) show a composition bias toward low complexity. A phosphoserine; by CDK1 mark is found at Ser-257, Ser-261, and Ser-265. The span at 265-281 (SPRENGIDKNRLLKKDA) shows a compositional bias: basic and acidic residues. The SP domain stretch occupies residues 267-450 (RENGIDKNRL…GGKPAYSFHV (184 aa)). Residues 282-297 (SGSPASTASSGSSSSL) are compositionally biased toward low complexity. Position 284 is a phosphoserine (Ser-284). The span at 298–308 (KSKEVSLHEKA) shows a compositional bias: basic and acidic residues. WD repeat units lie at residues 470 to 501 (GIPRHARQINTLNHGEVVCAVTISNPTRHVYT), 528 to 558 (NRDNYIRSCKLLPDGCTLIVGGEASTLSIWD), 572 to 602 (SSAPACYALAISPDSKVCFSCCSDGNIAVWD), 614 to 644 (GHTDGASCIDISNDGTKLWTGGLDNTVRSWD), 696 to 726 (LHESCVLSLKFAYCGKWFVSTGKDNLLNAWR), and 737 to 767 (KESSSVLSCDISVDDKYIVTGSGDKKATVYE).

This sequence belongs to the WD repeat Groucho/TLE family. In terms of assembly, homooligomer and heterooligomer with other family members. Binds RUNX1, RUNX3, FOXA2, KDM6A, UTY, histone H3, HESX1, ESRRG and the NF-kappa-B subunit RELA. Interacts with HES1 (via WRPW motif). Binds TCF7, LEF1, TCF7L1 and TCF7L2. Interacts with SIX3. Interacts with EFNB1. Interacts with TLE4. Interacts with FOXG1/BF-1; the interaction is inhibited by TLE6/GRG6. In terms of processing, phosphorylated, probably by CDK1. The degree of phosphorylation varies throughout the cell cycle, and is highest at the G2/M transition. Becomes hyperphosphorylated in response to cell differentiation and interaction with HES1 or RUNX1. Ubiquitinated by XIAP/BIRC4. As to expression, highly expressed in liver and lung. Detected at slightly lower levels in heart, brain, kidney and testis. Detected in fetal and adult stomach and small intestine, in adult ileum, duodenum and colon. Expressed in bone marrow-derived macrophages. Most abundant at the base of the crypts of Lieberkuhn in the small intestine.

Its subcellular location is the nucleus. The protein localises to the cytoplasm. Functionally, transcriptional corepressor that binds to a number of transcription factors. Inhibits NF-kappa-B-regulated gene expression. Inhibits the transcriptional activation mediated by FOXA2, and by CTNNB1 and TCF family members in Wnt signaling. Enhances FOXG1/BF-1- and HES1-mediated transcriptional repression. The effects of full-length TLE family members may be modulated by association with dominant-negative AES. Unusual function as coactivator for ESRRG. The protein is Transducin-like enhancer protein 1 (Tle1) of Mus musculus (Mouse).